The sequence spans 438 residues: Thymidine phosphorylase (438 aa).

Belongs to the thymidine/pyrimidine-nucleoside phosphorylase family. Homodimer.

It carries out the reaction thymidine + phosphate = 2-deoxy-alpha-D-ribose 1-phosphate + thymine. It participates in pyrimidine metabolism; dTMP biosynthesis via salvage pathway; dTMP from thymine: step 1/2. The enzymes which catalyze the reversible phosphorolysis of pyrimidine nucleosides are involved in the degradation of these compounds and in their utilization as carbon and energy sources, or in the rescue of pyrimidine bases for nucleotide synthesis. In Burkholderia orbicola (strain AU 1054), this protein is Thymidine phosphorylase.